A 101-amino-acid chain; its full sequence is Integration host factor subunit alpha (101 aa).

Belongs to the bacterial histone-like protein family. In terms of assembly, heterodimer of an alpha and a beta chain.

This protein is one of the two subunits of integration host factor, a specific DNA-binding protein that functions in genetic recombination as well as in transcriptional and translational control. The sequence is that of Integration host factor subunit alpha from Dinoroseobacter shibae (strain DSM 16493 / NCIMB 14021 / DFL 12).